The chain runs to 71 residues: Large ribosomal subunit protein bL31 (71 aa).

Zn(2+) is bound by residues Cys16, Cys18, Cys37, and Cys40.

This sequence belongs to the bacterial ribosomal protein bL31 family. Type A subfamily. In terms of assembly, part of the 50S ribosomal subunit. Zn(2+) serves as cofactor.

Its function is as follows. Binds the 23S rRNA. This chain is Large ribosomal subunit protein bL31, found in Pseudomonas entomophila (strain L48).